A 161-amino-acid chain; its full sequence is Cytochrome c-type biogenesis protein CcmE (161 aa).

Topologically, residues 1-8 (MNPRRQKR) are cytoplasmic. Residues 9–29 (LGIILAILIGVSATIGLMIYA) form a helical; Signal-anchor for type II membrane protein membrane-spanning segment. Over 30–161 (LNQNMDLFYT…SEEQKQGSGQ (132 aa)) the chain is Periplasmic. H129 and Y133 together coordinate heme.

The protein belongs to the CcmE/CycJ family.

It is found in the cell inner membrane. Functionally, heme chaperone required for the biogenesis of c-type cytochromes. Transiently binds heme delivered by CcmC and transfers the heme to apo-cytochromes in a process facilitated by CcmF and CcmH. This chain is Cytochrome c-type biogenesis protein CcmE, found in Vibrio vulnificus (strain CMCP6).